The following is a 480-amino-acid chain: LETM1 domain-containing protein LETM2, mitochondrial (480 aa).

A mitochondrion-targeting transit peptide spans 1 to 25 (MAFYSYNSFLAIFWTRLPGHSVYPS). The Mitochondrial intermembrane segment spans residues 26 to 175 (CSHFPSLAFL…LLRTCADVFR (150 aa)). Residues 88–118 (GKPQLEQTGKPKAASPQPTKEAKTETTEEKR) form a disordered region. Residues 107 to 118 (KEAKTETTEEKR) show a composition bias toward basic and acidic residues. A helical membrane pass occupies residues 176-196 (LVPFMVFIIVPFMEFLIPVFL). The Mitochondrial matrix segment spans residues 197–480 (KLFPDMLPST…QNSKADSKGA (284 aa)). The region spanning 219 to 436 (KTMAAKLEIA…SAPQLKGTKD (218 aa)) is the Letm1 RBD domain. The disordered stretch occupies residues 398–444 (ELPPNIETPKPNLGIPTPPPPESKENLTDSAPQLKGTKDEEFIQLPP).

The protein resides in the mitochondrion inner membrane. The sequence is that of LETM1 domain-containing protein LETM2, mitochondrial (Letm2) from Mus musculus (Mouse).